The primary structure comprises 396 residues: tRNA(Met) cytidine acetate ligase (396 aa).

ATP is bound by residues isoleucine 9 to histidine 22, glycine 103, asparagine 154, and arginine 179.

This sequence belongs to the TmcAL family.

It localises to the cytoplasm. It catalyses the reaction cytidine(34) in elongator tRNA(Met) + acetate + ATP = N(4)-acetylcytidine(34) in elongator tRNA(Met) + AMP + diphosphate. Catalyzes the formation of N(4)-acetylcytidine (ac(4)C) at the wobble position of elongator tRNA(Met), using acetate and ATP as substrates. First activates an acetate ion to form acetyladenylate (Ac-AMP) and then transfers the acetyl group to tRNA to form ac(4)C34. This is tRNA(Met) cytidine acetate ligase from Fusobacterium nucleatum subsp. nucleatum (strain ATCC 25586 / DSM 15643 / BCRC 10681 / CIP 101130 / JCM 8532 / KCTC 2640 / LMG 13131 / VPI 4355).